The sequence spans 117 residues: Small ribosomal subunit protein bS6 (117 aa).

The protein belongs to the bacterial ribosomal protein bS6 family.

Binds together with bS18 to 16S ribosomal RNA. In Porphyromonas gingivalis (strain ATCC BAA-308 / W83), this protein is Small ribosomal subunit protein bS6.